We begin with the raw amino-acid sequence, 432 residues long: Polypyrimidine tract-binding protein homolog 3 (432 aa).

RRM domains are found at residues 6–80 (KVVH…FSSH), 98–187 (NRIL…YNND), 245–319 (CTVL…FSKH), and 355–429 (KMIH…FSQL).

It localises to the nucleus. In terms of biological role, plays a role in pre-mRNA splicing. Binds to the polypyrimidine tract of introns. May promote the binding of U2 snRNP to pre-mRNA. The chain is Polypyrimidine tract-binding protein homolog 3 from Arabidopsis thaliana (Mouse-ear cress).